Consider the following 480-residue polypeptide: UDP-N-acetylmuramate--L-alanine ligase (480 aa).

Position 115–121 (Gly-115–Thr-121) interacts with ATP.

Belongs to the MurCDEF family.

It is found in the cytoplasm. It carries out the reaction UDP-N-acetyl-alpha-D-muramate + L-alanine + ATP = UDP-N-acetyl-alpha-D-muramoyl-L-alanine + ADP + phosphate + H(+). Its pathway is cell wall biogenesis; peptidoglycan biosynthesis. In terms of biological role, cell wall formation. In Gluconacetobacter diazotrophicus (strain ATCC 49037 / DSM 5601 / CCUG 37298 / CIP 103539 / LMG 7603 / PAl5), this protein is UDP-N-acetylmuramate--L-alanine ligase.